A 401-amino-acid chain; its full sequence is Nuclear hormone receptor family member nhr-65 (401 aa).

The nuclear receptor DNA-binding region spans 10-79 (PERCKVCGDT…AGMSSENFQF (70 aa)). NR C4-type zinc fingers lie at residues 13–33 (CKVC…CRAC) and 49–67 (CENH…LQRC). Residues 132–398 (KAEKLIEFGS…FSHPEFIQDA (267 aa)) form the NR LBD domain.

Belongs to the nuclear hormone receptor family.

It is found in the nucleus. Orphan nuclear receptor. In Caenorhabditis elegans, this protein is Nuclear hormone receptor family member nhr-65 (nhr-65).